Here is a 396-residue protein sequence, read N- to C-terminus: Probable isocitrate dehydrogenase [NAD] gamma 2, mitochondrial (396 aa).

Residues M1–V25 constitute a mitochondrion transit peptide. T117 contacts citrate. Residues R133, R164, and D251 each coordinate substrate. Mn(2+) is bound at residue D251. N321 is an ADP binding site.

This sequence belongs to the isocitrate and isopropylmalate dehydrogenases family. Heterooligomer of subunits alpha (IDH3A), beta (IDH3B), and gamma (IDH3G) in the apparent ratio of 2:1:1. The heterodimer containing one IDH3A and one IDH3B subunit and the heterodimer containing one IDH3A and one IDH3G subunit assemble into a heterotetramer (which contains two subunits of IDH3A, one of IDH3B and one of IDH3G) and further into the heterooctamer. Mg(2+) serves as cofactor. The cofactor is Mn(2+).

It is found in the mitochondrion. With respect to regulation, the heterotetramer and the heterodimer composed of IDH3A and IDH3G subunits can be allosterically activated by citrate (CIT) or/and ADP, and the two activators can act independently or synergistically. The heterodimer composed of IDH3A and IDH3B subunits cannot be allosterically regulated and the allosteric regulation of the heterotetramer is through the IDH3G subunit and not the IDH3B subunit. The IDH3G subunit contains the allosteric site which consists of a CIT-binding site and an ADP-binding site, and the binding of CIT and ADP causes conformational changes at the allosteric site which are transmitted to the active site in the catalytic subunit (IDH3A) through a cascade of conformational changes at the heterodimer interface, leading to stabilization of the isocitrate-binding at the active site and thus activation of the enzyme. ATP can activate the heterotetramer and the heterodimer composed of IDH3A and IDH3G subunits at low concentrations but inhibits their activities at high concentrations, whereas ATP exhibits only inhibitory effect on the heterodimer composed of IDH3A and IDH3B subunits. Functionally, regulatory subunit which plays a role in the allosteric regulation of the enzyme catalyzing the decarboxylation of isocitrate (ICT) into alpha-ketoglutarate. The heterodimer composed of the alpha (IDH3A) and beta (IDH3B) subunits and the heterodimer composed of the alpha (IDH3A) and gamma (IDH3G) subunits, have considerable basal activity but the full activity of the heterotetramer (containing two subunits of IDH3A, one of IDH3B and one of IDH3G) requires the assembly and cooperative function of both heterodimers. The chain is Probable isocitrate dehydrogenase [NAD] gamma 2, mitochondrial from Mus musculus (Mouse).